A 660-amino-acid polypeptide reads, in one-letter code: Elongation factor 4 (660 aa).

A tr-type G domain is found at 55-241 (AQIRNFCIIA…EVVRQVPPPQ (187 aa)). GTP-binding positions include 67–72 (DHGKST) and 188–191 (NKID).

Belongs to the TRAFAC class translation factor GTPase superfamily. Classic translation factor GTPase family. LepA subfamily.

The protein resides in the cell membrane. The catalysed reaction is GTP + H2O = GDP + phosphate + H(+). Its function is as follows. Required for accurate and efficient protein synthesis under certain stress conditions. May act as a fidelity factor of the translation reaction, by catalyzing a one-codon backward translocation of tRNAs on improperly translocated ribosomes. Back-translocation proceeds from a post-translocation (POST) complex to a pre-translocation (PRE) complex, thus giving elongation factor G a second chance to translocate the tRNAs correctly. Binds to ribosomes in a GTP-dependent manner. This Mycolicibacterium paratuberculosis (strain ATCC BAA-968 / K-10) (Mycobacterium paratuberculosis) protein is Elongation factor 4.